The following is a 484-amino-acid chain: Adenylosuccinate synthetase, chloroplastic (484 aa).

The N-terminal 44 residues, 1-44, are a transit peptide targeting the chloroplast; sequence MSLSTLSHPAAAAAGSGKSLFPAGPAAQSVHFPKARLPVPAAVS. GTP contacts are provided by residues 71 to 77 and 99 to 101; these read GDEGKGK and GHT. Residue Asp-72 is the Proton acceptor of the active site. Mg(2+)-binding residues include Asp-72 and Gly-99. Residues 72 to 75, 97 to 100, Thr-189, Arg-203, Gln-283, Thr-298, and Arg-362 contribute to the IMP site; these read DEGK and NAGH. The active-site Proton donor is His-100. 358 to 364 is a substrate binding site; that stretch reads TTTGRPR. Residues Arg-364, 390 to 392, and 473 to 475 each bind GTP; these read KLD and GVG.

The protein belongs to the adenylosuccinate synthetase family. Homodimer. The cofactor is Mg(2+).

The protein localises to the plastid. The protein resides in the chloroplast. The catalysed reaction is IMP + L-aspartate + GTP = N(6)-(1,2-dicarboxyethyl)-AMP + GDP + phosphate + 2 H(+). The protein operates within purine metabolism; AMP biosynthesis via de novo pathway; AMP from IMP: step 1/2. Its function is as follows. Plays an important role in the de novo pathway and in the salvage pathway of purine nucleotide biosynthesis. Catalyzes the first committed step in the biosynthesis of AMP from IMP. This is Adenylosuccinate synthetase, chloroplastic from Zea mays (Maize).